Consider the following 205-residue polypeptide: Large ribosomal subunit protein uL4 (205 aa).

The tract at residues 44–79 (RAGTKAQKTRREVSGSGAKPWRQKGTGRARAGSSRS) is disordered.

The protein belongs to the universal ribosomal protein uL4 family. Part of the 50S ribosomal subunit.

One of the primary rRNA binding proteins, this protein initially binds near the 5'-end of the 23S rRNA. It is important during the early stages of 50S assembly. It makes multiple contacts with different domains of the 23S rRNA in the assembled 50S subunit and ribosome. Functionally, forms part of the polypeptide exit tunnel. The chain is Large ribosomal subunit protein uL4 from Coxiella burnetii (strain Dugway 5J108-111).